The primary structure comprises 493 residues: Galactose-1-phosphate uridylyltransferase 2 (493 aa).

This sequence belongs to the galactose-1-phosphate uridylyltransferase type 2 family.

The protein resides in the cytoplasm. The enzyme catalyses alpha-D-galactose 1-phosphate + UDP-alpha-D-glucose = alpha-D-glucose 1-phosphate + UDP-alpha-D-galactose. Its pathway is carbohydrate metabolism; galactose metabolism. The sequence is that of Galactose-1-phosphate uridylyltransferase 2 (galT2) from Streptococcus pneumoniae (strain ATCC BAA-255 / R6).